The following is a 212-amino-acid chain: Thymidylate kinase (212 aa).

An ATP-binding site is contributed by 10 to 17; the sequence is GPEGAGKT.

Belongs to the thymidylate kinase family.

The catalysed reaction is dTMP + ATP = dTDP + ADP. Phosphorylation of dTMP to form dTDP in both de novo and salvage pathways of dTTP synthesis. This is Thymidylate kinase from Bacillus licheniformis (strain ATCC 14580 / DSM 13 / JCM 2505 / CCUG 7422 / NBRC 12200 / NCIMB 9375 / NCTC 10341 / NRRL NRS-1264 / Gibson 46).